The primary structure comprises 319 residues: Ferrochelatase (319 aa).

Fe cation-binding residues include His-194 and Glu-275.

This sequence belongs to the ferrochelatase family.

Its subcellular location is the cytoplasm. The enzyme catalyses heme b + 2 H(+) = protoporphyrin IX + Fe(2+). The protein operates within porphyrin-containing compound metabolism; protoheme biosynthesis; protoheme from protoporphyrin-IX: step 1/1. Functionally, catalyzes the ferrous insertion into protoporphyrin IX. The polypeptide is Ferrochelatase (Vibrio vulnificus (strain CMCP6)).